Here is a 160-residue protein sequence, read N- to C-terminus: Cytochrome b6-f complex subunit 4 (160 aa).

3 helical membrane-spanning segments follow: residues 36–56 (LLYI…GLAI), 95–115 (LLGV…PFLE), and 131–151 (TVFL…TLPI).

This sequence belongs to the cytochrome b family. PetD subfamily. In terms of assembly, the 4 large subunits of the cytochrome b6-f complex are cytochrome b6, subunit IV (17 kDa polypeptide, petD), cytochrome f and the Rieske protein, while the 4 small subunits are petG, petL, petM and petN. The complex functions as a dimer.

The protein resides in the plastid. It localises to the chloroplast thylakoid membrane. Functionally, component of the cytochrome b6-f complex, which mediates electron transfer between photosystem II (PSII) and photosystem I (PSI), cyclic electron flow around PSI, and state transitions. The protein is Cytochrome b6-f complex subunit 4 of Acorus calamus (Sweet flag).